Here is a 258-residue protein sequence, read N- to C-terminus: Acyl-[acyl-carrier-protein]--UDP-N-acetylglucosamine O-acyltransferase (258 aa).

The protein belongs to the transferase hexapeptide repeat family. LpxA subfamily. As to quaternary structure, homotrimer.

Its subcellular location is the cytoplasm. The catalysed reaction is a (3R)-hydroxyacyl-[ACP] + UDP-N-acetyl-alpha-D-glucosamine = a UDP-3-O-[(3R)-3-hydroxyacyl]-N-acetyl-alpha-D-glucosamine + holo-[ACP]. It participates in glycolipid biosynthesis; lipid IV(A) biosynthesis; lipid IV(A) from (3R)-3-hydroxytetradecanoyl-[acyl-carrier-protein] and UDP-N-acetyl-alpha-D-glucosamine: step 1/6. Involved in the biosynthesis of lipid A, a phosphorylated glycolipid that anchors the lipopolysaccharide to the outer membrane of the cell. This chain is Acyl-[acyl-carrier-protein]--UDP-N-acetylglucosamine O-acyltransferase, found in Neisseria gonorrhoeae (strain ATCC 700825 / FA 1090).